We begin with the raw amino-acid sequence, 259 residues long: MYTLGIDVGSASSKAVILKDGKDIVAAEVVQVGTGSSGPQRALDKAFEVSGLKKEDISYTVATGYGRFNFSDADKQISEISCHAKGIYFLVPTARTIIDIGGQDAKAIRLDDKGGIKQFFMNDKCAAGTGRFLEVMARVLETTLDEMAELDEQATDTAPISSTCTVFAESEVISQLSNGVSRNNIIKGVHLSVASRACGLAYRGGLEKDVVMTGGVAKNAGVVRAVAGVLKTDVIVAPNPQTTGALGAALYAYEAAQKK.

Cys125 and Cys164 together coordinate [4Fe-4S] cluster.

Homodimer. [4Fe-4S] cluster serves as cofactor.

Required for the activation of lactoyl-CoA dehydratase. This protein is extremely sensitive towards oxygen. The sequence is that of Activator of lactoyl-CoA dehydratase (lcdC) from Anaerotignum propionicum (Clostridium propionicum).